The sequence spans 127 residues: Protein yippee-like 4 (127 aa).

Residues 27–124 form the Yippee domain; the sequence is RTYSCVHCRA…IEMSHMVKDN (98 aa). 4 residues coordinate Zn(2+): Cys31, Cys34, Cys87, and Cys90. Phosphothreonine occurs at positions 92 and 93. Tyr98 bears the Phosphotyrosine mark.

The protein belongs to the yippee family.

It localises to the nucleus. The protein resides in the nucleolus. This chain is Protein yippee-like 4 (YPEL4), found in Chlorocebus aethiops (Green monkey).